Reading from the N-terminus, the 204-residue chain is MNSVVLLLSVVCLGVSSQQITDSQRLFSIAVNRVTHLHLLAQRLFSDFESSLQTEEQRQLNKIFLQDFCNSDYIISPIDKHETQRSSVLKLLSISYGLVESWEFPSRSLSGGSSLRNQISPRLSELKTGILLLIRANQDEAENYPDTDTLQHAPYGNYYQSLGGNESLRQTYELLACFKKDMHKVETYLTVAKCRLSPEANCTL.

Positions 1 to 17 (MNSVVLLLSVVCLGVSS) are cleaved as a signal peptide. Glutamine 18 bears the Pyrrolidone carboxylic acid mark. Histidine 36 serves as a coordination point for Zn(2+). Cysteine 69 and cysteine 177 are oxidised to a cystine. Glutamate 186 is a Zn(2+) binding site. A disulfide bridge connects residues cysteine 194 and cysteine 202.

This sequence belongs to the somatotropin/prolactin family.

It is found in the secreted. Functionally, growth hormone plays an important role in growth control and involved in the regulation of several anabolic processes. This Oreochromis niloticus (Nile tilapia) protein is Somatotropin (gh).